The primary structure comprises 227 residues: MAGVGAGPLRAMGRQALLLLALCATGAQGLYFHIGETEKRCFIEEIPDETMVIGNYRTQMWDKQKEVFLPSTPGLGMHVEVKDPDGKVVLSRQYGSEGRFTFTSHTPGDHQICLHSNSTRMALFAGGKLRVHLDIQVGEHANNYPEIAAKDKLTELQLRARQLLDQVEQIQKEQDYQRYREERFRLTSESTNQRVLWWSIAQTVILILTGIWQMRHLKSFFEAKKLV.

A signal peptide spans 1 to 29 (MAGVGAGPLRAMGRQALLLLALCATGAQG). Over 30–194 (LYFHIGETEK…RLTSESTNQR (165 aa)) the chain is Lumenal. One can recognise a GOLD domain in the interval 39 to 137 (KRCFIEEIPD…KLRVHLDIQV (99 aa)). A glycan (N-linked (GlcNAc...) asparagine) is linked at asparagine 117. Residues 147–176 (IAAKDKLTELQLRARQLLDQVEQIQKEQDY) are a coiled coil. The chain crosses the membrane as a helical span at residues 195 to 212 (VLWWSIAQTVILILTGIW). The Cytoplasmic segment spans residues 213–227 (QMRHLKSFFEAKKLV). Residues 220–221 (FF) carry the COPII vesicle coat-binding motif. Residues 220–227 (FFEAKKLV) carry the COPI vesicle coat-binding motif.

This sequence belongs to the EMP24/GP25L family.

Its subcellular location is the endoplasmic reticulum membrane. In terms of biological role, involved in vesicular protein trafficking, mainly in the early secretory pathway. targeting. Involved in the maintenance of the Golgi apparatus. Appears to play a role in the biosynthesis of secreted cargo including processing. Involved in endoplasmic reticulum stress response. May play a role in the regulation of heat-shock response and apoptosis. The sequence is that of Transmembrane emp24 domain-containing protein 4 (TMED4) from Homo sapiens (Human).